The chain runs to 883 residues: Phosphoenolpyruvate carboxylase (883 aa).

Catalysis depends on residues His-138 and Lys-546.

The protein belongs to the PEPCase type 1 family. The cofactor is Mg(2+).

The catalysed reaction is oxaloacetate + phosphate = phosphoenolpyruvate + hydrogencarbonate. Its function is as follows. Forms oxaloacetate, a four-carbon dicarboxylic acid source for the tricarboxylic acid cycle. This Escherichia coli O45:K1 (strain S88 / ExPEC) protein is Phosphoenolpyruvate carboxylase.